Here is a 140-residue protein sequence, read N- to C-terminus: MRFMAGPAGSQNPGPMCFHSSLQALYTVLLIVLVMMSLVFGKFVPVNWERPQPLPVPKYLRCYRCLLETKELGCLLGSDTCLTPAGSSCITLHIKNGSNSDVMVSDCRSKEQMSDCSHTQTSPVSGFWMFSQCCFLGFLQ.

The N-terminal stretch at 1-41 is a signal peptide; that stretch reads MRFMAGPAGSQNPGPMCFHSSLQALYTVLLIVLVMMSLVFG. One can recognise a UPAR/Ly6 domain in the interval 60–140; it reads LRCYRCLLET…SQCCFLGFLQ (81 aa). Intrachain disulfides connect Cys-62-Cys-89, Cys-65-Cys-74, Cys-81-Cys-107, and Cys-116-Cys-133. Asn-96 is a glycosylation site (N-linked (GlcNAc...) asparagine).

As to quaternary structure, forms oligomers. N-glycosylated.

The protein localises to the secreted. In terms of biological role, may have a role in hematopoietic cell differentiation. In Macaca mulatta (Rhesus macaque), this protein is Lymphocyte antigen 6 complex locus protein G5c (LY6G5C).